The sequence spans 341 residues: Ribosomal RNA small subunit methyltransferase H (341 aa).

Residues 47-49 (GGY), aspartate 64, phenylalanine 91, aspartate 109, and glutamine 116 contribute to the S-adenosyl-L-methionine site.

It belongs to the methyltransferase superfamily. RsmH family.

It localises to the cytoplasm. It catalyses the reaction cytidine(1402) in 16S rRNA + S-adenosyl-L-methionine = N(4)-methylcytidine(1402) in 16S rRNA + S-adenosyl-L-homocysteine + H(+). Its function is as follows. Specifically methylates the N4 position of cytidine in position 1402 (C1402) of 16S rRNA. The sequence is that of Ribosomal RNA small subunit methyltransferase H from Agrobacterium fabrum (strain C58 / ATCC 33970) (Agrobacterium tumefaciens (strain C58)).